Reading from the N-terminus, the 160-residue chain is MFLSTFEKQLDAKRRIVVPQEFRALAAGPFDGVFCFPSIEADCIEGGGKALFDRYNGVIEELEFGDPLRSALETSVLGGMAKLSFDTAGRITLPESLCDLFGLTDWVTIVGLGDRFQIWEREAFNAHRAAQRELARQGLAELRAQQRAARLAHSGQGSAG.

SpoVT-AbrB domains lie at 5-51 (TFEK…GKAL) and 80-123 (MAKL…EREA).

It belongs to the MraZ family. In terms of assembly, forms oligomers.

The protein resides in the cytoplasm. Its subcellular location is the nucleoid. This Phenylobacterium zucineum (strain HLK1) protein is Transcriptional regulator MraZ.